We begin with the raw amino-acid sequence, 481 residues long: Protein nucleotidyltransferase YdiU (481 aa).

Gly-85, Gly-87, Arg-88, Lys-108, Asp-120, Gly-121, Arg-172, and Arg-179 together coordinate ATP. Asp-248 acts as the Proton acceptor in catalysis. Asn-249 and Asp-258 together coordinate Mg(2+). Asp-258 provides a ligand contact to ATP.

This sequence belongs to the SELO family. The cofactor is Mg(2+). Mn(2+) is required as a cofactor.

The catalysed reaction is L-seryl-[protein] + ATP = 3-O-(5'-adenylyl)-L-seryl-[protein] + diphosphate. It catalyses the reaction L-threonyl-[protein] + ATP = 3-O-(5'-adenylyl)-L-threonyl-[protein] + diphosphate. It carries out the reaction L-tyrosyl-[protein] + ATP = O-(5'-adenylyl)-L-tyrosyl-[protein] + diphosphate. The enzyme catalyses L-histidyl-[protein] + UTP = N(tele)-(5'-uridylyl)-L-histidyl-[protein] + diphosphate. The catalysed reaction is L-seryl-[protein] + UTP = O-(5'-uridylyl)-L-seryl-[protein] + diphosphate. It catalyses the reaction L-tyrosyl-[protein] + UTP = O-(5'-uridylyl)-L-tyrosyl-[protein] + diphosphate. In terms of biological role, nucleotidyltransferase involved in the post-translational modification of proteins. It can catalyze the addition of adenosine monophosphate (AMP) or uridine monophosphate (UMP) to a protein, resulting in modifications known as AMPylation and UMPylation. In Cereibacter sphaeroides (strain ATCC 17023 / DSM 158 / JCM 6121 / CCUG 31486 / LMG 2827 / NBRC 12203 / NCIMB 8253 / ATH 2.4.1.) (Rhodobacter sphaeroides), this protein is Protein nucleotidyltransferase YdiU.